A 247-amino-acid polypeptide reads, in one-letter code: Cytochrome c oxidase subunit 2 (247 aa).

At 12 to 38 (DVPTPWGLYFQDSSTPNQEGIIELHDN) the chain is on the mitochondrial intermembrane side. A helical membrane pass occupies residues 39–59 (IMFYLVLILCTVSWLLFSIVK). The Mitochondrial matrix portion of the chain corresponds to 60–78 (DSSKNPLPHKYLVHGQTIE). Residues 79–101 (IIWTILPAVVLLIIAFPSFILLY) traverse the membrane as a helical segment. The Mitochondrial intermembrane segment spans residues 102–247 (LCDEVISPAM…KEFLTWLNEQ (146 aa)). 6 residues coordinate Cu cation: His182, Cys217, Glu219, Cys221, His225, and Met228. Glu219 contacts Mg(2+).

It belongs to the cytochrome c oxidase subunit 2 family. In terms of assembly, component of the cytochrome c oxidase (complex IV, CIV), a multisubunit enzyme composed of a catalytic core of 3 subunits and several supernumerary subunits. The complex exists as a monomer or a dimer and forms supercomplexes (SCs) in the inner mitochondrial membrane with ubiquinol-cytochrome c oxidoreductase (cytochrome b-c1 complex, complex III, CIII). It depends on Cu cation as a cofactor. The signal sequence of COX2 is processed by IMP1.

The protein resides in the mitochondrion inner membrane. It catalyses the reaction 4 Fe(II)-[cytochrome c] + O2 + 8 H(+)(in) = 4 Fe(III)-[cytochrome c] + 2 H2O + 4 H(+)(out). Its function is as follows. Component of the cytochrome c oxidase, the last enzyme in the mitochondrial electron transport chain which drives oxidative phosphorylation. The respiratory chain contains 3 multisubunit complexes succinate dehydrogenase (complex II, CII), ubiquinol-cytochrome c oxidoreductase (cytochrome b-c1 complex, complex III, CIII) and cytochrome c oxidase (complex IV, CIV), that cooperate to transfer electrons derived from NADH and succinate to molecular oxygen, creating an electrochemical gradient over the inner membrane that drives transmembrane transport and the ATP synthase. Cytochrome c oxidase is the component of the respiratory chain that catalyzes the reduction of oxygen to water. Electrons originating from reduced cytochrome c in the intermembrane space (IMS) are transferred via the dinuclear copper A center (CU(A)) of subunit 2 and heme A of subunit 1 to the active site in subunit 1, a binuclear center (BNC) formed by heme A3 and copper B (CU(B)). The BNC reduces molecular oxygen to 2 water molecules using 4 electrons from cytochrome c in the IMS and 4 protons from the mitochondrial matrix. In Cyberlindnera saturnus (Yeast), this protein is Cytochrome c oxidase subunit 2 (COX2).